Consider the following 269-residue polypeptide: Adenosylcobinamide-GDP ribazoletransferase (269 aa).

Helical transmembrane passes span 8 to 28, 41 to 61, 70 to 90, 114 to 136, and 196 to 216; these read QFNL…PTAI, YFPL…CFML, VCLL…DGLA, IGTY…LSSL, and VPAV…SACV.

Belongs to the CobS family. It depends on Mg(2+) as a cofactor.

The protein localises to the cell inner membrane. It carries out the reaction alpha-ribazole + adenosylcob(III)inamide-GDP = adenosylcob(III)alamin + GMP + H(+). The enzyme catalyses alpha-ribazole 5'-phosphate + adenosylcob(III)inamide-GDP = adenosylcob(III)alamin 5'-phosphate + GMP + H(+). It participates in cofactor biosynthesis; adenosylcobalamin biosynthesis; adenosylcobalamin from cob(II)yrinate a,c-diamide: step 7/7. Its function is as follows. Joins adenosylcobinamide-GDP and alpha-ribazole to generate adenosylcobalamin (Ado-cobalamin). Also synthesizes adenosylcobalamin 5'-phosphate from adenosylcobinamide-GDP and alpha-ribazole 5'-phosphate. The polypeptide is Adenosylcobinamide-GDP ribazoletransferase (Pseudoalteromonas atlantica (strain T6c / ATCC BAA-1087)).